The following is a 458-amino-acid chain: Carboxypeptidase N catalytic chain (458 aa).

A signal peptide spans M1–P20. Residues R24 to V338 form the Peptidase M14 domain. Cysteines 42 and 104 form a disulfide. Zn(2+) is bound by residues H86, E89, and H216. An intrachain disulfide couples C271 to C311. The active-site Proton donor/acceptor is the E308. 3 O-linked (GalNAc...) threonine glycosylation sites follow: T400, T402, and T409. A disordered region spans residues S423–A458.

Belongs to the peptidase M14 family. Tetramer of two catalytic chains and two glycosylated inactive chains. The cofactor is Zn(2+). Synthesized in the liver and secreted in plasma.

Its subcellular location is the secreted. It localises to the extracellular space. The enzyme catalyses Release of a C-terminal basic amino acid, preferentially lysine.. In terms of biological role, protects the body from potent vasoactive and inflammatory peptides containing C-terminal Arg or Lys (such as kinins or anaphylatoxins) which are released into the circulation. In Homo sapiens (Human), this protein is Carboxypeptidase N catalytic chain (CPN1).